Consider the following 193-residue polypeptide: Small ribosomal subunit protein eS7 (193 aa).

Belongs to the eukaryotic ribosomal protein eS7 family.

The polypeptide is Small ribosomal subunit protein eS7 (rps7) (Dictyostelium discoideum (Social amoeba)).